The sequence spans 484 residues: Trigger factor (484 aa).

The PPIase FKBP-type domain maps to 162 to 243 (GDFISIDLSA…VKSVKERELP (82 aa)). The tract at residues 427 to 484 (DGNTIDTSEFFGKPPENDVTDLLDDDADGDAGVDADGDTENSAEPADADSADTAQGAG) is disordered. Acidic residues predominate over residues 444 to 476 (DVTDLLDDDADGDAGVDADGDTENSAEPADADS).

It belongs to the FKBP-type PPIase family. Tig subfamily.

It is found in the cytoplasm. It catalyses the reaction [protein]-peptidylproline (omega=180) = [protein]-peptidylproline (omega=0). In terms of biological role, involved in protein export. Acts as a chaperone by maintaining the newly synthesized protein in an open conformation. Functions as a peptidyl-prolyl cis-trans isomerase. This Mycobacterium ulcerans (strain Agy99) protein is Trigger factor.